Reading from the N-terminus, the 357-residue chain is Glutamate 5-kinase (357 aa).

K7 is a binding site for ATP. 3 residues coordinate substrate: S43, D130, and N142. ATP is bound by residues 162-163 (TD) and 205-211 (TGGMTTK). Residues 270–341 (EGELCLDQGA…QALSVVTDAE (72 aa)) form the PUA domain.

This sequence belongs to the glutamate 5-kinase family.

It localises to the cytoplasm. It carries out the reaction L-glutamate + ATP = L-glutamyl 5-phosphate + ADP. The protein operates within amino-acid biosynthesis; L-proline biosynthesis; L-glutamate 5-semialdehyde from L-glutamate: step 1/2. Functionally, catalyzes the transfer of a phosphate group to glutamate to form L-glutamate 5-phosphate. The sequence is that of Glutamate 5-kinase from Synechococcus sp. (strain CC9902).